The following is a 310-amino-acid chain: MTEKLPLALFLMGPTASGKTDLAIRLRQKYPVEIISVDSALIYKDMDIGTAKPDAGELALAPHRLIDILDPSEAYSAADFRRDAISEMNKIVAEGKIPLLVGGTMLYYKALLEGLSPLPAADQEIRKQIEAESIEQGWQALHDQLREIDPVSAERIHPNDPQRLSRALEVYRISGKTLTELTQTKGDSLPFRVKQFAIAPKERKELHRRIELRFEKMIEAGFEDEMKALYAREDLHPELPSIRCVGYRQMWDYLDGNCDLDEAVFRGVCATRQLAKRQITWLRSWDDLTWLDSENIEQALETLSDAIASD.

Residue 13–20 (GPTASGKT) participates in ATP binding. Residue 15 to 20 (TASGKT) participates in substrate binding. 4 interaction with substrate tRNA regions span residues 38–41 (DSAL), 162–166 (QRLSR), 243–248 (RCVGYR), and 276–283 (KRQITWLR).

This sequence belongs to the IPP transferase family. In terms of assembly, monomer. Requires Mg(2+) as cofactor.

It catalyses the reaction adenosine(37) in tRNA + dimethylallyl diphosphate = N(6)-dimethylallyladenosine(37) in tRNA + diphosphate. Functionally, catalyzes the transfer of a dimethylallyl group onto the adenine at position 37 in tRNAs that read codons beginning with uridine, leading to the formation of N6-(dimethylallyl)adenosine (i(6)A). This chain is tRNA dimethylallyltransferase, found in Vibrio atlanticus (strain LGP32) (Vibrio splendidus (strain Mel32)).